We begin with the raw amino-acid sequence, 359 residues long: S-adenosylmethionine:tRNA ribosyltransferase-isomerase (359 aa).

Belongs to the QueA family. Monomer.

It localises to the cytoplasm. The catalysed reaction is 7-aminomethyl-7-carbaguanosine(34) in tRNA + S-adenosyl-L-methionine = epoxyqueuosine(34) in tRNA + adenine + L-methionine + 2 H(+). It participates in tRNA modification; tRNA-queuosine biosynthesis. Transfers and isomerizes the ribose moiety from AdoMet to the 7-aminomethyl group of 7-deazaguanine (preQ1-tRNA) to give epoxyqueuosine (oQ-tRNA). The sequence is that of S-adenosylmethionine:tRNA ribosyltransferase-isomerase from Ralstonia pickettii (strain 12J).